Consider the following 52-residue polypeptide: Large ribosomal subunit protein eL40 (52 aa).

4 residues coordinate Zn(2+): Cys20, Cys23, Cys34, and Cys39.

Belongs to the eukaryotic ribosomal protein eL40 family. As to quaternary structure, component of the large ribosomal subunit. Mature ribosomes consist of a small (40S) and a large (60S) subunit. The 40S subunit contains about 32 different proteins and 1 molecule of RNA (18S). The 60S subunit contains 45 different proteins and 3 molecules of RNA (25S, 5.8S and 5S). Zn(2+) serves as cofactor.

The protein localises to the cytoplasm. Component of the ribosome, a large ribonucleoprotein complex responsible for the synthesis of proteins in the cell. The small ribosomal subunit (SSU) binds messenger RNAs (mRNAs) and translates the encoded message by selecting cognate aminoacyl-transfer RNA (tRNA) molecules. The large subunit (LSU) contains the ribosomal catalytic site termed the peptidyl transferase center (PTC), which catalyzes the formation of peptide bonds, thereby polymerizing the amino acids delivered by tRNAs into a polypeptide chain. The nascent polypeptides leave the ribosome through a tunnel in the LSU and interact with protein factors that function in enzymatic processing, targeting, and the membrane insertion of nascent chains at the exit of the ribosomal tunnel. The polypeptide is Large ribosomal subunit protein eL40 (Candida albicans (strain SC5314 / ATCC MYA-2876) (Yeast)).